We begin with the raw amino-acid sequence, 497 residues long: Probable malate:quinone oxidoreductase (497 aa).

It belongs to the MQO family. It depends on FAD as a cofactor.

The enzyme catalyses (S)-malate + a quinone = a quinol + oxaloacetate. It functions in the pathway carbohydrate metabolism; tricarboxylic acid cycle; oxaloacetate from (S)-malate (quinone route): step 1/1. This Prochlorococcus marinus subsp. pastoris (strain CCMP1986 / NIES-2087 / MED4) protein is Probable malate:quinone oxidoreductase.